The primary structure comprises 350 residues: C4-dicarboxylate-binding protein DctB (350 aa).

Residues Met-1–Ala-18 form the signal peptide.

It belongs to the bacterial solute-binding protein 7 family.

It is found in the secreted. Functionally, part of the binding-protein-dependent transport system for uptake of C4-dicarboxylates. Responsible for growth on fumarate and succinate but not malate. Is not directly involved in C4-dicarboxylate uptake, but plays a sensory role in the DctS/DctR two-component system which regulates the expression of the dctA C4-dicarboxylate transporter. The protein is C4-dicarboxylate-binding protein DctB (dctB) of Bacillus subtilis (strain 168).